Consider the following 501-residue polypeptide: Cobyric acid synthase (501 aa).

Residues 251–446 (NIDIAIIRLS…LHGIFDSEEF (196 aa)) form the GATase cobBQ-type domain. Catalysis depends on Cys-332, which acts as the Nucleophile. Residue His-438 is part of the active site.

The protein belongs to the CobB/CobQ family. CobQ subfamily.

It participates in cofactor biosynthesis; adenosylcobalamin biosynthesis. Its function is as follows. Catalyzes amidations at positions B, D, E, and G on adenosylcobyrinic A,C-diamide. NH(2) groups are provided by glutamine, and one molecule of ATP is hydrogenolyzed for each amidation. This Clostridium botulinum (strain Alaska E43 / Type E3) protein is Cobyric acid synthase.